The chain runs to 617 residues: Dihydroxy-acid dehydratase (617 aa).

Residue Asp-82 participates in Mg(2+) binding. Cys-123 serves as a coordination point for [2Fe-2S] cluster. Residues Asp-124 and Lys-125 each contribute to the Mg(2+) site. Position 125 is an N6-carboxylysine (Lys-125). Cys-197 serves as a coordination point for [2Fe-2S] cluster. Glu-497 provides a ligand contact to Mg(2+). Ser-523 acts as the Proton acceptor in catalysis.

This sequence belongs to the IlvD/Edd family. Homodimer. The cofactor is [2Fe-2S] cluster. Requires Mg(2+) as cofactor.

The enzyme catalyses (2R)-2,3-dihydroxy-3-methylbutanoate = 3-methyl-2-oxobutanoate + H2O. It carries out the reaction (2R,3R)-2,3-dihydroxy-3-methylpentanoate = (S)-3-methyl-2-oxopentanoate + H2O. The protein operates within amino-acid biosynthesis; L-isoleucine biosynthesis; L-isoleucine from 2-oxobutanoate: step 3/4. Its pathway is amino-acid biosynthesis; L-valine biosynthesis; L-valine from pyruvate: step 3/4. Functionally, functions in the biosynthesis of branched-chain amino acids. Catalyzes the dehydration of (2R,3R)-2,3-dihydroxy-3-methylpentanoate (2,3-dihydroxy-3-methylvalerate) into 2-oxo-3-methylpentanoate (2-oxo-3-methylvalerate) and of (2R)-2,3-dihydroxy-3-methylbutanoate (2,3-dihydroxyisovalerate) into 2-oxo-3-methylbutanoate (2-oxoisovalerate), the penultimate precursor to L-isoleucine and L-valine, respectively. This is Dihydroxy-acid dehydratase from Streptomyces coelicolor (strain ATCC BAA-471 / A3(2) / M145).